The primary structure comprises 384 residues: MRYMTAGESHGKGLSVIIEGIPSGLIIDFDQVQREMTRRQGGYGRGRRMQIEQDAVDVRGGIRHGYTTGAPISLFIENKDHTHWTKVMQAEPLQEELERPRTLTRPRPGHADLVGGLKYGHRDLRDVLERSSARETAARVAVGAIAKQLLGQLGIDVFSHVRSIGGIDADFVNPMEYREVIEASPVRCADEAAAERMMAAIDQAKKDGDTLGGEVEVVVTDMMPGIGSFTQNETKLDSRIARAVISVNAMKAVGFGDGFDLARRKGSTVQDEILHDETGYFRKTNHLGGIEGGMSTGMPIRVQVAMKPIPTLYRPLQSVDIETKEPFVAQVERSDACAVPAAAVVLEAVVAVEIAAAVLEMFGTSTLDRLKQAVTAYREEVRLF.

NADP(+) contacts are provided by Arg-39 and Arg-45. Residues 130 to 132 (RSS), 248 to 249 (NA), Gly-292, 307 to 311 (KPIPT), and Arg-333 contribute to the FMN site.

The protein belongs to the chorismate synthase family. Homotetramer. FMNH2 is required as a cofactor.

It catalyses the reaction 5-O-(1-carboxyvinyl)-3-phosphoshikimate = chorismate + phosphate. It functions in the pathway metabolic intermediate biosynthesis; chorismate biosynthesis; chorismate from D-erythrose 4-phosphate and phosphoenolpyruvate: step 7/7. Its function is as follows. Catalyzes the anti-1,4-elimination of the C-3 phosphate and the C-6 proR hydrogen from 5-enolpyruvylshikimate-3-phosphate (EPSP) to yield chorismate, which is the branch point compound that serves as the starting substrate for the three terminal pathways of aromatic amino acid biosynthesis. This reaction introduces a second double bond into the aromatic ring system. This Exiguobacterium sibiricum (strain DSM 17290 / CCUG 55495 / CIP 109462 / JCM 13490 / 255-15) protein is Chorismate synthase.